A 356-amino-acid polypeptide reads, in one-letter code: Magnesium-protoporphyrin IX monomethyl ester [oxidative] cyclase (356 aa).

This sequence belongs to the AcsF family. The cofactor is Fe cation.

It catalyses the reaction Mg-protoporphyrin IX 13-monomethyl ester + 3 NADPH + 3 O2 + 2 H(+) = 3,8-divinyl protochlorophyllide a + 3 NADP(+) + 5 H2O. It participates in porphyrin-containing compound metabolism; chlorophyll biosynthesis (light-independent). Catalyzes the formation of the isocyclic ring in chlorophyll biosynthesis. Mediates the cyclase reaction, which results in the formation of divinylprotochlorophyllide (Pchlide) characteristic of all chlorophylls from magnesium-protoporphyrin IX 13-monomethyl ester (MgPMME). This Parasynechococcus marenigrum (strain WH8102) protein is Magnesium-protoporphyrin IX monomethyl ester [oxidative] cyclase.